Here is a 69-residue protein sequence, read N- to C-terminus: Cytochrome c oxidase assembly factor 3, mitochondrial (69 aa).

Residues 1–19 (MNQGNQAFENARKPFRRAN) lie on the Mitochondrial matrix side of the membrane. Residues 20–42 (LITALGLGAFAFATFAYSVYRVH) form a helical membrane-spanning segment. Residues 43-69 (EDTFEDVVMTPELEKKIAEDRDLSKKN) lie on the Mitochondrial intermembrane side of the membrane.

It belongs to the COA3 family. As to quaternary structure, component of 250-400 kDa complexes called cytochrome oxidase assembly intermediates or COA complexes.

Its subcellular location is the mitochondrion inner membrane. Its function is as follows. Required for assembly of cytochrome c oxidase (complex IV). In Schizosaccharomyces pombe (strain 972 / ATCC 24843) (Fission yeast), this protein is Cytochrome c oxidase assembly factor 3, mitochondrial (coa3).